Reading from the N-terminus, the 221-residue chain is Beta-phosphoglucomutase (221 aa).

Aspartate 8 functions as the Nucleophile in the catalytic mechanism. Aspartate 8 and aspartate 10 together coordinate Mg(2+). Aspartate 8 carries the post-translational modification 4-aspartylphosphate. The Proton donor/acceptor role is filled by aspartate 10. Aspartate 10, glycine 46, valine 47, arginine 49, serine 116, lysine 117, and asparagine 118 together coordinate beta-D-glucose 6-phosphate. Aspartate 170 is a binding site for Mg(2+).

Belongs to the HAD-like hydrolase superfamily. CbbY/CbbZ/Gph/YieH family. In terms of assembly, monomer. Mg(2+) is required as a cofactor. Post-translationally, autophosphorylated.

It localises to the cytoplasm. It catalyses the reaction beta-D-glucose 1-phosphate = beta-D-glucose 6-phosphate. Activated by phosphorylation. Competitively inhibited by alpha-D-galactose-1-phosphate. In terms of biological role, catalyzes the interconversion of D-glucose 1-phosphate (G1P) and D-glucose 6-phosphate (G6P), forming beta-D-glucose 1,6-(bis)phosphate (beta-G16P) as an intermediate. The beta-phosphoglucomutase (Beta-PGM) acts on the beta-C(1) anomer of G1P. Glucose or lactose are used in preference to maltose, which is only utilized after glucose or lactose has been exhausted. It plays a key role in the regulation of the flow of carbohydrate intermediates in glycolysis and the formation of the sugar nucleotide UDP-glucose. This Lactococcus lactis subsp. lactis (strain IL1403) (Streptococcus lactis) protein is Beta-phosphoglucomutase.